The sequence spans 417 residues: Serine hydroxymethyltransferase (417 aa).

(6S)-5,6,7,8-tetrahydrofolate contacts are provided by residues L116 and 120-122 (GHL). Position 225 is an N6-(pyridoxal phosphate)lysine (K225).

This sequence belongs to the SHMT family. As to quaternary structure, homodimer. The cofactor is pyridoxal 5'-phosphate.

It localises to the cytoplasm. It catalyses the reaction (6R)-5,10-methylene-5,6,7,8-tetrahydrofolate + glycine + H2O = (6S)-5,6,7,8-tetrahydrofolate + L-serine. It participates in one-carbon metabolism; tetrahydrofolate interconversion. It functions in the pathway amino-acid biosynthesis; glycine biosynthesis; glycine from L-serine: step 1/1. Its function is as follows. Catalyzes the reversible interconversion of serine and glycine with tetrahydrofolate (THF) serving as the one-carbon carrier. This reaction serves as the major source of one-carbon groups required for the biosynthesis of purines, thymidylate, methionine, and other important biomolecules. Also exhibits THF-independent aldolase activity toward beta-hydroxyamino acids, producing glycine and aldehydes, via a retro-aldol mechanism. The sequence is that of Serine hydroxymethyltransferase from Hydrogenobaculum sp. (strain Y04AAS1).